Here is a 482-residue protein sequence, read N- to C-terminus: Glutamate--tRNA ligase (482 aa).

A 'HIGH' region motif is present at residues 10–20 (PSPTGFLHIGN). The 'KMSKS' region motif lies at 253-257 (KLSKR). Position 256 (K256) interacts with ATP.

It belongs to the class-I aminoacyl-tRNA synthetase family. Glutamate--tRNA ligase type 1 subfamily. As to quaternary structure, monomer.

The protein localises to the cytoplasm. It carries out the reaction tRNA(Glu) + L-glutamate + ATP = L-glutamyl-tRNA(Glu) + AMP + diphosphate. Functionally, catalyzes the attachment of glutamate to tRNA(Glu) in a two-step reaction: glutamate is first activated by ATP to form Glu-AMP and then transferred to the acceptor end of tRNA(Glu). In Mesoplasma florum (strain ATCC 33453 / NBRC 100688 / NCTC 11704 / L1) (Acholeplasma florum), this protein is Glutamate--tRNA ligase.